Reading from the N-terminus, the 263-residue chain is Insertion sequence IS21-like putative ATP-binding protein (263 aa).

An ATP-binding site is contributed by 114–121; that stretch reads GPSGTGKT.

It belongs to the IS21/IS1162 putative ATP-binding protein family.

This chain is Insertion sequence IS21-like putative ATP-binding protein (tnpB), found in Bacteroides fragilis.